Here is a 1213-residue protein sequence, read N- to C-terminus: DNA-directed RNA polymerase subunit beta' (1213 aa).

C60, C62, C75, and C78 together coordinate Zn(2+). Mg(2+) is bound by residues D450, D452, and D454. Zn(2+) contacts are provided by C819, C893, C900, and C903.

Belongs to the RNA polymerase beta' chain family. As to quaternary structure, the RNAP catalytic core consists of 2 alpha, 1 beta, 1 beta' and 1 omega subunit. When a sigma factor is associated with the core the holoenzyme is formed, which can initiate transcription. Mg(2+) serves as cofactor. The cofactor is Zn(2+).

It catalyses the reaction RNA(n) + a ribonucleoside 5'-triphosphate = RNA(n+1) + diphosphate. DNA-dependent RNA polymerase catalyzes the transcription of DNA into RNA using the four ribonucleoside triphosphates as substrates. The chain is DNA-directed RNA polymerase subunit beta' from Streptococcus pyogenes serotype M6 (strain ATCC BAA-946 / MGAS10394).